Consider the following 322-residue polypeptide: Secreted RxLR effector protein RXLR-C17 (322 aa).

Residues 1 to 25 (MREPAFSFRLHLFAAMILLVDVFSA) form the signal peptide. A RxLR-dEER motif is present at residues 43-62 (RQLRARDSQAKNYVIRDEER). Asparagine 73 carries N-linked (GlcNAc...) asparagine glycosylation.

This sequence belongs to the RxLR effector family.

It localises to the secreted. It is found in the host cytoplasm. The protein localises to the host nucleus. Secreted effector that suppresses pattern-triggered immunity (PTI) in plant host. The sequence is that of Secreted RxLR effector protein RXLR-C17 from Plasmopara halstedii (Downy mildew of sunflower).